We begin with the raw amino-acid sequence, 357 residues long: Peptide chain release factor 1 (357 aa).

An N5-methylglutamine modification is found at Q234.

The protein belongs to the prokaryotic/mitochondrial release factor family. Post-translationally, methylated by PrmC. Methylation increases the termination efficiency of RF1.

Its subcellular location is the cytoplasm. Functionally, peptide chain release factor 1 directs the termination of translation in response to the peptide chain termination codons UAG and UAA. This chain is Peptide chain release factor 1, found in Frankia casuarinae (strain DSM 45818 / CECT 9043 / HFP020203 / CcI3).